Here is a 284-residue protein sequence, read N- to C-terminus: Bifunctional protein FolD (284 aa).

NADP(+) contacts are provided by residues 166-168 (GAS) and Ile-232.

This sequence belongs to the tetrahydrofolate dehydrogenase/cyclohydrolase family. Homodimer.

The catalysed reaction is (6R)-5,10-methylene-5,6,7,8-tetrahydrofolate + NADP(+) = (6R)-5,10-methenyltetrahydrofolate + NADPH. The enzyme catalyses (6R)-5,10-methenyltetrahydrofolate + H2O = (6R)-10-formyltetrahydrofolate + H(+). It participates in one-carbon metabolism; tetrahydrofolate interconversion. Catalyzes the oxidation of 5,10-methylenetetrahydrofolate to 5,10-methenyltetrahydrofolate and then the hydrolysis of 5,10-methenyltetrahydrofolate to 10-formyltetrahydrofolate. This Alteromonas mediterranea (strain DSM 17117 / CIP 110805 / LMG 28347 / Deep ecotype) protein is Bifunctional protein FolD.